The following is a 569-amino-acid chain: Archaeosine synthase (569 aa).

In terms of domain architecture, PUA spans 495–569 (SGGKDINYIE…ALVNIRNVKS (75 aa)).

This sequence belongs to the archaeosine synthase type 1 family. In terms of assembly, homodimer.

The catalysed reaction is 7-cyano-7-carbaguanosine(15) in tRNA + L-glutamine + H2O = archaeosine(15) in tRNA + L-glutamate. Its pathway is tRNA modification; archaeosine-tRNA biosynthesis. In terms of biological role, is responsible for the final step in the biosynthesis of archaeosine, a modified nucleoside present in the dihydrouridine loop (D-loop) of archaeal tRNA. Catalyzes the conversion of 7-cyano-7-deazaguanine (preQ0)-modified tRNA to archaeosine-tRNA, transforming a nitrile group to a formamidine group. Can use either glutamine, asparagine or ammonium as amino donor. The polypeptide is Archaeosine synthase (Methanocaldococcus jannaschii (strain ATCC 43067 / DSM 2661 / JAL-1 / JCM 10045 / NBRC 100440) (Methanococcus jannaschii)).